A 137-amino-acid chain; its full sequence is Small ribosomal subunit protein bS6 (137 aa).

Positions 113 to 137 are disordered; that stretch reads EEQREKKNFRKPFIKREEAATKENK. Residues 126-137 show a composition bias toward basic and acidic residues; that stretch reads IKREEAATKENK.

Belongs to the bacterial ribosomal protein bS6 family.

Functionally, binds together with bS18 to 16S ribosomal RNA. The chain is Small ribosomal subunit protein bS6 from Mycoplasma capricolum subsp. capricolum (strain California kid / ATCC 27343 / NCTC 10154).